Reading from the N-terminus, the 200-residue chain is Ankyrin repeat-containing protein YAR1 (200 aa).

ANK repeat units follow at residues 49–78 (SDST…RANS) and 92–121 (TGNT…ADPF). At serine 78 the chain carries Phosphoserine. The tract at residues 152–173 (VEPEDDEEDTQTEGKNSVQITK) is disordered. A compositionally biased stretch (acidic residues) spans 153–162 (EPEDDEEDTQ). The segment covering 164–173 (EGKNSVQITK) has biased composition (polar residues).

Required for normal rate of cell proliferation. The polypeptide is Ankyrin repeat-containing protein YAR1 (YAR1) (Saccharomyces cerevisiae (strain ATCC 204508 / S288c) (Baker's yeast)).